Here is a 304-residue protein sequence, read N- to C-terminus: Putative ankyrin repeat protein R598 (304 aa).

ANK repeat units lie at residues 7-36 (NIVTDIKNAICKDDLDSFIILMENNPSINL), 77-107 (YISTVLREEVIKNCSVKILKYLFDMGLPVDF), 122-151 (GSNHYIKENPGQDTLSLLRLLIEYGVDVNA), 152-181 (HNYLPLYSAVSSKNFDKVKLLVENGANVLR), 183-209 (ANGNENSFYFKIDSIKYLLDNGVEIDM), 210-239 (NLSRALFLSIKDNSIECIQFYLELGADINK), and 265-293 (FDFTSLNKLAGNNNERIIDVLINEANVDI).

In Acanthamoeba polyphaga (Amoeba), this protein is Putative ankyrin repeat protein R598.